A 270-amino-acid chain; its full sequence is MKNIFIVLIFLFLSSCAEVKAQDKQHEEQQIIEQEPLQNNETPQEANQESINSANTAKSVLHNHDNNQTESVLTQDLHEQKKTAITTKVTFKIDNNDMVLGNKKSNVIVVEYFSPTCPHCAYYHQTIFPALKKKYIDTNKIAYVVREFIATKQDLDAAILARCKGDINSFIQFHNIILQQQDKWAYSNKYRELLTDIGQLGGISPEEYKQCLNSDKITETLIANTNLVAKAPKFIGTPSFFVNGVQTENYSIDNISRAVDRALEDETKSK.

The signal sequence occupies residues M1–A17. The Thioredoxin domain maps to S71–E264. C117 and C120 are joined by a disulfide.

It belongs to the thioredoxin family. DsbA subfamily.

The protein localises to the periplasm. May be required for disulfide bond formation in some proteins. The protein is Putative protein-disulfide oxidoreductase RT0103 of Rickettsia typhi (strain ATCC VR-144 / Wilmington).